A 619-amino-acid polypeptide reads, in one-letter code: 1-deoxy-D-xylulose-5-phosphate synthase (619 aa).

Residues histidine 76 and 117–119 (AHS) each bind thiamine diphosphate. Aspartate 148 is a Mg(2+) binding site. Residues 149–150 (GA), asparagine 177, tyrosine 284, and glutamate 366 each bind thiamine diphosphate. Asparagine 177 contacts Mg(2+).

It belongs to the transketolase family. DXPS subfamily. As to quaternary structure, homodimer. Mg(2+) serves as cofactor. It depends on thiamine diphosphate as a cofactor.

It carries out the reaction D-glyceraldehyde 3-phosphate + pyruvate + H(+) = 1-deoxy-D-xylulose 5-phosphate + CO2. It participates in metabolic intermediate biosynthesis; 1-deoxy-D-xylulose 5-phosphate biosynthesis; 1-deoxy-D-xylulose 5-phosphate from D-glyceraldehyde 3-phosphate and pyruvate: step 1/1. Catalyzes the acyloin condensation reaction between C atoms 2 and 3 of pyruvate and glyceraldehyde 3-phosphate to yield 1-deoxy-D-xylulose-5-phosphate (DXP). This is 1-deoxy-D-xylulose-5-phosphate synthase from Azoarcus sp. (strain BH72).